The chain runs to 212 residues: Riboflavin kinase (212 aa).

The segment at 1–87 is H-T-H motif-like; sequence MKKSNLDLLI…HEELSDALYR (87 aa). Positions 88–212 are riboflavin kinase; sequence GIIIGEVVSG…DGDRIRIKTL (125 aa). Position 97-102 (97-102) interacts with CDP; the sequence is GIGEGA. Mg(2+)-binding residues include Thr124 and Asn126. The FMN site is built by Thr180 and Glu188. CDP is bound at residue 193 to 196; the sequence is VNLR.

The protein belongs to the archaeal riboflavin kinase family. Requires Mg(2+) as cofactor.

The enzyme catalyses riboflavin + CTP = CDP + FMN + H(+). Its pathway is cofactor biosynthesis; FMN biosynthesis; FMN from riboflavin (CTP route): step 1/1. Functionally, catalyzes the CTP-dependent phosphorylation of riboflavin (vitamin B2) to form flavin mononucleotide (FMN). The protein is Riboflavin kinase (ribK) of Pyrococcus furiosus (strain ATCC 43587 / DSM 3638 / JCM 8422 / Vc1).